Reading from the N-terminus, the 133-residue chain is ATP synthase epsilon chain (133 aa).

This sequence belongs to the ATPase epsilon chain family. As to quaternary structure, F-type ATPases have 2 components, CF(1) - the catalytic core - and CF(0) - the membrane proton channel. CF(1) has five subunits: alpha(3), beta(3), gamma(1), delta(1), epsilon(1). CF(0) has three main subunits: a, b and c.

It is found in the cell membrane. In terms of biological role, produces ATP from ADP in the presence of a proton gradient across the membrane. The protein is ATP synthase epsilon chain of Bacillus cereus (strain ATCC 14579 / DSM 31 / CCUG 7414 / JCM 2152 / NBRC 15305 / NCIMB 9373 / NCTC 2599 / NRRL B-3711).